The chain runs to 225 residues: MKNIEKLEQSLTYEFKDKNLLIHALTHKSFKKSYNNERLEFLGDAVLDLVVGEYLFHKFTKDAEGDLSKLRAALVNEKSFAKIANSLNLGDFIFMSVAEENNGGKEKPSILSDALEAIIGAIHLEAGFEFAKTIALRLMEKNFPQIDAKILIKDYKTKLQEITQGKIGQTPQYETVRAFGPDHLKQFEIALMLDGKELARAIAGSKKEAQQMAAKIALEKLGSLQ.

The 124-residue stretch at 4–127 (IEKLEQSLTY…IIGAIHLEAG (124 aa)) folds into the RNase III domain. Mg(2+) is bound at residue glutamate 40. The active site involves aspartate 44. Aspartate 113 and glutamate 116 together coordinate Mg(2+). Glutamate 116 is a catalytic residue. Residues 154 to 223 (DYKTKLQEIT…AKIALEKLGS (70 aa)) form the DRBM domain.

It belongs to the ribonuclease III family. In terms of assembly, homodimer. The cofactor is Mg(2+).

It is found in the cytoplasm. It catalyses the reaction Endonucleolytic cleavage to 5'-phosphomonoester.. Digests double-stranded RNA. Involved in the processing of primary rRNA transcript to yield the immediate precursors to the large and small rRNAs (23S and 16S). Processes some mRNAs, and tRNAs when they are encoded in the rRNA operon. Processes pre-crRNA and tracrRNA of type II CRISPR loci if present in the organism. This chain is Ribonuclease 3, found in Campylobacter jejuni subsp. doylei (strain ATCC BAA-1458 / RM4099 / 269.97).